Consider the following 128-residue polypeptide: Small ribosomal subunit protein bS6 (128 aa).

The protein belongs to the bacterial ribosomal protein bS6 family.

Functionally, binds together with bS18 to 16S ribosomal RNA. This Leifsonia xyli subsp. xyli (strain CTCB07) protein is Small ribosomal subunit protein bS6.